Consider the following 303-residue polypeptide: Oxygen-dependent coproporphyrinogen-III oxidase (303 aa).

S93 lines the substrate pocket. A divalent metal cation contacts are provided by H97 and H107. Catalysis depends on H107, which acts as the Proton donor. Residue 109–111 (NVR) participates in substrate binding. H146 and H176 together coordinate a divalent metal cation. The important for dimerization stretch occupies residues 241–276 (YVEFNLVYDRGTLFGLQSGGRTESILMSLPPQVRWG). Residue 259 to 261 (GGR) coordinates substrate.

It belongs to the aerobic coproporphyrinogen-III oxidase family. As to quaternary structure, homodimer. Requires a divalent metal cation as cofactor.

Its subcellular location is the cytoplasm. The enzyme catalyses coproporphyrinogen III + O2 + 2 H(+) = protoporphyrinogen IX + 2 CO2 + 2 H2O. It participates in porphyrin-containing compound metabolism; protoporphyrin-IX biosynthesis; protoporphyrinogen-IX from coproporphyrinogen-III (O2 route): step 1/1. Functionally, involved in the heme biosynthesis. Catalyzes the aerobic oxidative decarboxylation of propionate groups of rings A and B of coproporphyrinogen-III to yield the vinyl groups in protoporphyrinogen-IX. This is Oxygen-dependent coproporphyrinogen-III oxidase from Pseudomonas putida (strain ATCC 47054 / DSM 6125 / CFBP 8728 / NCIMB 11950 / KT2440).